The following is a 378-amino-acid chain: Cyclic GMP-AMP synthase-like receptor 1 (378 aa).

Mg(2+) contacts are provided by Glu-71, Asp-73, and Asp-187. 71–73 (EFD) is a binding site for ATP. Residues Asp-187 and 233–240 (TSSFYEAE) each bind GTP. Residues 237–240 (YEAE), Lys-258, and 271–275 (SYHIK) contribute to the ATP site.

Belongs to the mab-21 family. The cofactor is Mg(2+). Mn(2+) serves as cofactor.

It catalyses the reaction GTP + ATP = 3',2'-cGAMP + 2 diphosphate. It carries out the reaction GTP + ATP = pppA(2'-5')pG + diphosphate. The catalysed reaction is pppA(2'-5')pG = 3',2'-cGAMP + diphosphate. Its activity is regulated as follows. The enzyme activity is specifically activated by double-stranded RNA (dsRNA). Recognizes long dsRNA (&gt;30 bp) with no preference for 5' RNA phosphorylation. Its function is as follows. Nucleotidyltransferase that catalyzes the formation of cyclic GMP-AMP (3',2'-cGAMP) from ATP and GTP and plays a key role in antiviral innate immunity. Synthesizes 3',2'-cGAMP in a two-step reaction through production of the linear intermediate pppA(2'-5')pG. Acts as a key sensor of double-stranded RNA (dsRNA), the presence of dsRNA in the cytoplasm being a danger signal that triggers the immune responses. Directly binds dsRNA, activating the nucleotidyltransferase activity, leading to synthesis of 3',2'-cGAMP, a second messenger that binds to and activates Sting, thereby triggering the antiviral immune response via activation of the NF-kappa-B transcription factor Rel (Relish). 3',2'-cGAMP is protected from poxin cleavage. The protein is Cyclic GMP-AMP synthase-like receptor 1 of Drosophila melanogaster (Fruit fly).